The sequence spans 315 residues: Glycine--tRNA ligase alpha subunit (315 aa).

The protein belongs to the class-II aminoacyl-tRNA synthetase family. Tetramer of two alpha and two beta subunits.

Its subcellular location is the cytoplasm. It carries out the reaction tRNA(Gly) + glycine + ATP = glycyl-tRNA(Gly) + AMP + diphosphate. This chain is Glycine--tRNA ligase alpha subunit, found in Pseudomonas putida (strain GB-1).